The primary structure comprises 92 residues: Small ribosomal subunit protein bS16 (92 aa).

The protein belongs to the bacterial ribosomal protein bS16 family.

In Staphylococcus carnosus (strain TM300), this protein is Small ribosomal subunit protein bS16.